Consider the following 343-residue polypeptide: Dihydroorotate dehydrogenase (quinone) (343 aa).

FMN-binding positions include alanine 61–lysine 65 and threonine 85. Substrate is bound at residue lysine 65. Residue asparagine 110–phenylalanine 114 coordinates substrate. FMN is bound by residues asparagine 138 and asparagine 171. Residue asparagine 171 participates in substrate binding. Serine 174 (nucleophile) is an active-site residue. Asparagine 176 provides a ligand contact to substrate. Positions 216 and 244 each coordinate FMN. A substrate-binding site is contributed by asparagine 245–threonine 246. FMN is bound by residues glycine 267, glycine 296, and tyrosine 317–serine 318.

It belongs to the dihydroorotate dehydrogenase family. Type 2 subfamily. Monomer. FMN serves as cofactor.

It localises to the cell membrane. The catalysed reaction is (S)-dihydroorotate + a quinone = orotate + a quinol. It functions in the pathway pyrimidine metabolism; UMP biosynthesis via de novo pathway; orotate from (S)-dihydroorotate (quinone route): step 1/1. Its function is as follows. Catalyzes the conversion of dihydroorotate to orotate with quinone as electron acceptor. The polypeptide is Dihydroorotate dehydrogenase (quinone) (Pseudomonas syringae pv. tomato (strain ATCC BAA-871 / DC3000)).